The primary structure comprises 620 residues: MSFDIAKYPTLALVDSTQELRLLPKESLPKLCDELRRYLLDSVSRSSGHFASGLGTVELTVALHYVYNTPFDQLIWDVGHQAYPHKILTGRRDKIGTIRQKGGLHPFPWRGESEYDVLSVGHSSTSISAGIGIAVAAEKEGKDRRTVCVIGDGAITAGMAFEAMNHAGDIRPDMLVILNDNEMSISENVGALNNHLAQLLSGKLYSSLREGGKKVFSGVPPIKELLKRTEEHIKGMVVPGTLFEELGFNYIGPVDGHDVMGLISTLKNMRDLKGPQFLHIMTKKGRGYEPAEKDPITFHAVPKFDPSSGCLPKSSGGLPGYSKIFGDWLCETAAKDSKLMAITPAMREGSGMVEFSRKFPDRYFDVAIAEQHAVTFAAGLAIGGYKPVVAIYSTFLQRAYDQVIHDVAIQKLPVMFAIDRAGIVGADGQTHQGAFDLSYLRCIPDMVIMTPSDENECRQMLLTGYHYNDGPTAVRYPRGNAQGVALTPLEKLPIGKGLVKRHGEKLAILNFGTLMPEAAKVAEALNATLVDMRFVKPLDDTLILEMAAQHDALVTLEENAIMGGAGSGVNEVLMAHRKPVPVLNIGLPDFFIPQGTQEEARAELGLDAAGIEAKIKAWLA.

Thiamine diphosphate is bound by residues H80 and 121-123; that span reads GHS. D152 serves as a coordination point for Mg(2+). Thiamine diphosphate is bound by residues 153–154, N181, Y288, and E370; that span reads GA. N181 is a binding site for Mg(2+).

This sequence belongs to the transketolase family. DXPS subfamily. In terms of assembly, homodimer. The cofactor is Mg(2+). Thiamine diphosphate is required as a cofactor.

It catalyses the reaction D-glyceraldehyde 3-phosphate + pyruvate + H(+) = 1-deoxy-D-xylulose 5-phosphate + CO2. It functions in the pathway metabolic intermediate biosynthesis; 1-deoxy-D-xylulose 5-phosphate biosynthesis; 1-deoxy-D-xylulose 5-phosphate from D-glyceraldehyde 3-phosphate and pyruvate: step 1/1. Its function is as follows. Catalyzes the acyloin condensation reaction between C atoms 2 and 3 of pyruvate and glyceraldehyde 3-phosphate to yield 1-deoxy-D-xylulose-5-phosphate (DXP). This Salmonella heidelberg (strain SL476) protein is 1-deoxy-D-xylulose-5-phosphate synthase.